Here is a 194-residue protein sequence, read N- to C-terminus: Histone H1.0-A (194 aa).

Disordered regions lie at residues 1–29 (MTEN…YSDM) and 96–194 (ADEV…GRKK). One can recognise an H15 domain in the interval 22–95 (DHPKYSDMIL…GASGSFRLAK (74 aa)). Composition is skewed to basic residues over residues 102-164 (PAKK…KTVR) and 172-194 (KAKK…GRKK).

This sequence belongs to the histone H1/H5 family.

It localises to the nucleus. It is found in the chromosome. In terms of biological role, histones H1 are necessary for the condensation of nucleosome chains into higher-order structures. The histones H1.0 are found in cells that are in terminal stages of differentiation or that have low rates of cell division. The chain is Histone H1.0-A (h1-0-a) from Xenopus laevis (African clawed frog).